We begin with the raw amino-acid sequence, 811 residues long: MESQGVPPGPYRATKLWNEVTTSFRAGMPLRKHRQHFKKYGNCFTAGEAVDWLYDLLRNNSNFGPEVTRQQTIQLLRKFLKNHVIEDIKGRWGSENVDDNNQLFRFPATSPLKTLPRRYPELRKNNIENFSKDKDSIFKLRNLSRRTPKRHGLHLSQENGEKIKHEIINEDQENAIDNRELSQEDVEEVWRYVILIYLQTILGVPSLEEVINPKQVIPQYIMYNMANTSKRGVVILQNKSDDLPHWVLSAMKCLANWPRSNDMNNPTYVGFERDVFRTIADYFLDLPEPLLTFEYYELFVNILVVCGYITVSDRSSGIHKIQDDPQSSKFLHLNNLNSFKSTECLLLSLLHREKNKEESDSTERLQISNPGFQERCAKKMQLVNLRNRRVSANDIMGGSCHNLIGLSNMHDLSSNSKPRCCSLEGIVDVPGNSSKEASSVFHQSFPNIEGQNNKLFLESKPKQEFLLNLHSEENIQKPFSAGFKRTSTLTVQDQEELCNGKCKSKQLCRSQSLLLRSSTRRNSYINTPVAEIIMKPNVGQGSTSVQTAMESELGESSATINKRLCKSTIELSENSLLPASSMLTGTQSLLQPHLERVAIDALQLCCLLLPPPNRRKLQLLMRMISRMSQNVDMPKLHDAMGTRSLMIHTFSRCVLCCAEEVDLDELLAGRLVSFLMDHHQEILQVPSYLQTAVEKHLDYLKKGHIENPGDGLFAPLPTYSYCKQISAQEFDEQKVSTSQAAIAELLENIIKNRSLPLKEKRKKLKQFQKEYPLIYQKRFPTTESEAALFGDKPTIKQPMLILRKPKFRSLR.

The 85-residue stretch at 24-108 (FRAGMPLRKH…DNNQLFRFPA (85 aa)) folds into the DEP domain. Residues 281–321 (DYFLDLPEPLLTFEYYELFVNILVVCGYITVSDRSSGIHKI) form the Rho-GAP domain. S512 bears the Phosphoserine mark. Residues 598–653 (AIDALQLCCLLLPPPNRRKLQLLMRMISRMSQNVDMPKLHDAMGTRSLMIHTFSRC) are interaction with ZNF224.

As to quaternary structure, isoform 2 and isoform 5 can form homodimers and heterodimers. Interacts with ZNF224. In terms of tissue distribution, expressed in testis. Up-regulated in bladder cancer cells (at protein level).

It localises to the nucleus. In terms of biological role, may be involved in transcriptional regulation as a transcriptional corepressor. The DEPDC1A-ZNF224 complex may play a critical role in bladder carcinogenesis by repressing the transcription of the A20 gene, leading to transport of NF-KB protein into the nucleus, resulting in suppression of apoptosis of bladder cancer cells. The sequence is that of DEP domain-containing protein 1A (DEPDC1) from Homo sapiens (Human).